The following is a 382-amino-acid chain: MSLKEKTQSLFANAFGYPATHTIQAPGRVNLIGEHTDYNDGFVLPCAIDYQTVISCAPRDDRKVRVMAADYENQLDEFSLNAPIVAHENYQWANYVRGVVKHLQLRNNSFGGVDMVISGNVPQGAGLSSSASLEVAVGTVLQQLYHLPLDGAQIALNGQEAENQFVGCNCGIMDQLISALGKKDHALLIDCRSLGTKAVSMPKGVAVVIINSNFKRTLVGSEYNTRREQCETGARFFQQPALRDVTIEEFNAVAHELDPIVAKRVRHILTENARTVEAASALEQGDLKRMDELMAESHASMRDDFEITVPQIDTLVEIVKAVIGDKGGVRMTGGGFGGCIVALIPEELVPAVQQAVAEQYEAKTGIKETFYVCKPSQGAGQC.

34 to 37 (EHTD) contributes to the substrate binding site. 124-130 (GAGLSSS) lines the ATP pocket. 2 residues coordinate Mg(2+): Ser130 and Glu162. The Proton acceptor role is filled by Asp174. Tyr223 lines the substrate pocket.

It belongs to the GHMP kinase family. GalK subfamily.

Its subcellular location is the cytoplasm. It catalyses the reaction alpha-D-galactose + ATP = alpha-D-galactose 1-phosphate + ADP + H(+). The protein operates within carbohydrate metabolism; galactose metabolism. Its function is as follows. Catalyzes the transfer of the gamma-phosphate of ATP to D-galactose to form alpha-D-galactose-1-phosphate (Gal-1-P). The chain is Galactokinase from Shigella flexneri serotype 5b (strain 8401).